Consider the following 238-residue polypeptide: Zinc import ATP-binding protein ZnuC (238 aa).

Residues 5–220 form the ABC transporter domain; sequence VKLKNVCVNL…LEFISIFGLK (216 aa). 37-44 contributes to the ATP binding site; the sequence is GPNGAGKS.

Belongs to the ABC transporter superfamily. Zinc importer (TC 3.A.1.15.5) family. The complex is composed of two ATP-binding proteins (ZnuC), two transmembrane proteins (ZnuB) and a solute-binding protein (ZnuA).

The protein localises to the cell inner membrane. The catalysed reaction is Zn(2+)(out) + ATP(in) + H2O(in) = Zn(2+)(in) + ADP(in) + phosphate(in) + H(+)(in). Its function is as follows. Part of the ABC transporter complex ZnuABC involved in zinc import. Responsible for energy coupling to the transport system. This is Zinc import ATP-binding protein ZnuC from Buchnera aphidicola subsp. Acyrthosiphon pisum (strain APS) (Acyrthosiphon pisum symbiotic bacterium).